We begin with the raw amino-acid sequence, 125 residues long: Small ribosomal subunit protein eS8 (125 aa).

The span at 1–23 (MQFQGRSRRKYTGAKLKSARGKR) shows a compositional bias: basic residues. Residues 1–34 (MQFQGRSRRKYTGAKLKSARGKRKFELGREPAAT) are disordered.

The protein belongs to the eukaryotic ribosomal protein eS8 family. As to quaternary structure, part of the 30S ribosomal subunit.

This chain is Small ribosomal subunit protein eS8, found in Methanococcoides burtonii (strain DSM 6242 / NBRC 107633 / OCM 468 / ACE-M).